The sequence spans 286 residues: MSIQHFRVALIPFFAAFCLPVFAHPETLVKVKDAEDQLGARVGYIELDLNSGKILESFRPEERFPMMSTFKVLLCGAVLSRVDAGQEQLGRRIHYSQNDLVEYSPVTEKHLTDGMTVRELCSAAITMSDNTAANLLLTTIGGPKELTAFLHNMGDHVTRLDSWEPELNEAIPNDERDTTMPAAMATTLRKLLTGELLTLASRQQLIDWMEADKVAGPLLRSALPAGWFIADKSGAGERGSRGIIAALGPDGKPSRIVVIYTTGSQATMDERNRQIAEIGASLIKHW.

An N-terminal signal peptide occupies residues 1–23; the sequence is MSIQHFRVALIPFFAAFCLPVFA. S68 serves as the catalytic Acyl-ester intermediate. C75 and C121 are joined by a disulfide. Catalysis depends on E166, which acts as the Proton acceptor. 232–234 is a binding site for substrate; the sequence is KSG.

The protein belongs to the class-A beta-lactamase family.

The enzyme catalyses a beta-lactam + H2O = a substituted beta-amino acid. Functionally, TEM-type are the most prevalent beta-lactamases in enterobacteria; they hydrolyze the beta-lactam bond in susceptible beta-lactam antibiotics, thus conferring resistance to penicillins and cephalosporins such as ceftazidime. The protein is Beta-lactamase TEM-12 (blaT-12b) of Klebsiella oxytoca.